Here is a 343-residue protein sequence, read N- to C-terminus: Dihydroorotase (343 aa).

The Zn(2+) site is built by H13 and H15. Substrate is bound by residues 15–17 and N41; that span reads HLR. Zn(2+)-binding residues include K99, H136, and H174. N6-carboxylysine is present on K99. H136 provides a ligand contact to substrate. Substrate is bound at residue L219. Zn(2+) is bound at residue D247. D247 is an active-site residue. H251 and A263 together coordinate substrate.

Belongs to the metallo-dependent hydrolases superfamily. DHOase family. Class II DHOase subfamily. Homodimer. The cofactor is Zn(2+).

It carries out the reaction (S)-dihydroorotate + H2O = N-carbamoyl-L-aspartate + H(+). It functions in the pathway pyrimidine metabolism; UMP biosynthesis via de novo pathway; (S)-dihydroorotate from bicarbonate: step 3/3. In terms of biological role, catalyzes the reversible cyclization of carbamoyl aspartate to dihydroorotate. The protein is Dihydroorotase of Shewanella baltica (strain OS223).